The chain runs to 1374 residues: L-2-aminoadipate reductase large subunit (1374 aa).

A Carrier domain is found at 828–905; the sequence is SEFNQQEREI…AFAAEVSRLK (78 aa). Residue Ser865 is modified to O-(pantetheine 4'-phosphoryl)serine.

This sequence belongs to the ATP-dependent AMP-binding enzyme family. Heterodimer of an alpha and a beta subunit. The cofactor is pantetheine 4'-phosphate.

It catalyses the reaction (S)-2-amino-6-oxohexanoate + NADP(+) + H2O = L-2-aminoadipate + NADPH + 2 H(+). The enzyme catalyses (S)-2-amino-6-oxohexanoate + NAD(+) + H2O = L-2-aminoadipate + NADH + 2 H(+). It carries out the reaction (S)-2-amino-6-oxohexanoate + AMP + diphosphate + NADP(+) = L-2-aminoadipate + ATP + NADPH + H(+). It functions in the pathway amino-acid biosynthesis; L-lysine biosynthesis via AAA pathway; L-lysine from L-alpha-aminoadipate (fungal route): step 1/3. Functionally, catalyzes the activation of alpha-aminoadipate by ATP-dependent adenylation and the reduction of activated alpha-aminoadipate by NADPH. The activated alpha-aminoadipate is bound to the phosphopantheinyl group of the enzyme itself before it is reduced to (S)-2-amino-6-oxohexanoate. The sequence is that of L-2-aminoadipate reductase large subunit (LYS2) from Candida glabrata (strain ATCC 2001 / BCRC 20586 / JCM 3761 / NBRC 0622 / NRRL Y-65 / CBS 138) (Yeast).